Consider the following 176-residue polypeptide: Large ribosomal subunit protein uL6 (176 aa).

The protein belongs to the universal ribosomal protein uL6 family. As to quaternary structure, part of the 50S ribosomal subunit.

Its function is as follows. This protein binds to the 23S rRNA, and is important in its secondary structure. It is located near the subunit interface in the base of the L7/L12 stalk, and near the tRNA binding site of the peptidyltransferase center. The polypeptide is Large ribosomal subunit protein uL6 (Dechloromonas aromatica (strain RCB)).